A 448-amino-acid polypeptide reads, in one-letter code: Bifunctional protein GlmU (448 aa).

Residues 1-232 (MSERSLLVVV…VDEVAGVNSR (232 aa)) are pyrophosphorylase. UDP-N-acetyl-alpha-D-glucosamine contacts are provided by residues 11 to 14 (LAAG), Lys-25, Gln-78, and 83 to 84 (GT). Asp-108 serves as a coordination point for Mg(2+). 4 residues coordinate UDP-N-acetyl-alpha-D-glucosamine: Gly-144, Glu-158, Asn-173, and Asn-230. Asn-230 is a binding site for Mg(2+). A linker region spans residues 233 to 253 (LQLAEAEAILQGRLRRAAMAG). Residues 254 to 448 (GATLVAPETV…LRAARGKPKV (195 aa)) form an N-acetyltransferase region. The UDP-N-acetyl-alpha-D-glucosamine site is built by Arg-319 and Lys-337. The active-site Proton acceptor is His-349. UDP-N-acetyl-alpha-D-glucosamine contacts are provided by Tyr-352 and Asn-363. Acetyl-CoA is bound by residues Ala-366, 372–373 (NY), Ser-409, and Arg-426.

This sequence in the N-terminal section; belongs to the N-acetylglucosamine-1-phosphate uridyltransferase family. In the C-terminal section; belongs to the transferase hexapeptide repeat family. In terms of assembly, homotrimer. Mg(2+) is required as a cofactor.

It is found in the cytoplasm. It catalyses the reaction alpha-D-glucosamine 1-phosphate + acetyl-CoA = N-acetyl-alpha-D-glucosamine 1-phosphate + CoA + H(+). It carries out the reaction N-acetyl-alpha-D-glucosamine 1-phosphate + UTP + H(+) = UDP-N-acetyl-alpha-D-glucosamine + diphosphate. The protein operates within nucleotide-sugar biosynthesis; UDP-N-acetyl-alpha-D-glucosamine biosynthesis; N-acetyl-alpha-D-glucosamine 1-phosphate from alpha-D-glucosamine 6-phosphate (route II): step 2/2. It participates in nucleotide-sugar biosynthesis; UDP-N-acetyl-alpha-D-glucosamine biosynthesis; UDP-N-acetyl-alpha-D-glucosamine from N-acetyl-alpha-D-glucosamine 1-phosphate: step 1/1. Its pathway is bacterial outer membrane biogenesis; LPS lipid A biosynthesis. Catalyzes the last two sequential reactions in the de novo biosynthetic pathway for UDP-N-acetylglucosamine (UDP-GlcNAc). The C-terminal domain catalyzes the transfer of acetyl group from acetyl coenzyme A to glucosamine-1-phosphate (GlcN-1-P) to produce N-acetylglucosamine-1-phosphate (GlcNAc-1-P), which is converted into UDP-GlcNAc by the transfer of uridine 5-monophosphate (from uridine 5-triphosphate), a reaction catalyzed by the N-terminal domain. The chain is Bifunctional protein GlmU from Azorhizobium caulinodans (strain ATCC 43989 / DSM 5975 / JCM 20966 / LMG 6465 / NBRC 14845 / NCIMB 13405 / ORS 571).